We begin with the raw amino-acid sequence, 229 residues long: Flagellar L-ring protein (229 aa).

The N-terminal stretch at 1-25 is a signal peptide; the sequence is MKQVRLLPSAAVRAACALAAAALAG. Residue Cys26 is the site of N-palmitoyl cysteine attachment. Cys26 is lipidated: S-diacylglycerol cysteine.

The protein belongs to the FlgH family. The basal body constitutes a major portion of the flagellar organelle and consists of four rings (L,P,S, and M) mounted on a central rod.

The protein localises to the cell outer membrane. Its subcellular location is the bacterial flagellum basal body. Assembles around the rod to form the L-ring and probably protects the motor/basal body from shearing forces during rotation. The protein is Flagellar L-ring protein of Burkholderia multivorans (strain ATCC 17616 / 249).